A 280-amino-acid chain; its full sequence is MAFSGHHARKRFAQHWLIDAAVLTQILDAADVQPDDRLLEVGPGRGALTERLLASSASAVHAVELDRDLVSGLRQRFADQARFSLQEGDVLSVPLTLADGRAANKVVANIPYNITGPLLERLLGRLDRPVDHPYQRLVLLLQKEVAQRIRALPGQSCFSALSVRLQLLAHCTTVCPVPPRSFKPPPKVHSEVILIEPLAPEQRLEPLLAKRVESLLRQAFLARRKMLRNTLAKVLPAAELNALADDLGISLQQRPQELSPATWVELARGLNRADLVDPEP.

The S-adenosyl-L-methionine site is built by His15, Leu17, Gly42, Glu64, Asp89, and Asn109.

It belongs to the class I-like SAM-binding methyltransferase superfamily. rRNA adenine N(6)-methyltransferase family. RsmA subfamily.

The protein resides in the cytoplasm. It carries out the reaction adenosine(1518)/adenosine(1519) in 16S rRNA + 4 S-adenosyl-L-methionine = N(6)-dimethyladenosine(1518)/N(6)-dimethyladenosine(1519) in 16S rRNA + 4 S-adenosyl-L-homocysteine + 4 H(+). Specifically dimethylates two adjacent adenosines (A1518 and A1519) in the loop of a conserved hairpin near the 3'-end of 16S rRNA in the 30S particle. May play a critical role in biogenesis of 30S subunits. In Prochlorococcus marinus (strain MIT 9303), this protein is Ribosomal RNA small subunit methyltransferase A.